Consider the following 160-residue polypeptide: Ribosomal RNA large subunit methyltransferase H (160 aa).

S-adenosyl-L-methionine contacts are provided by Leu-77 and Gly-109.

Belongs to the RNA methyltransferase RlmH family. As to quaternary structure, homodimer.

The protein resides in the cytoplasm. The enzyme catalyses pseudouridine(1915) in 23S rRNA + S-adenosyl-L-methionine = N(3)-methylpseudouridine(1915) in 23S rRNA + S-adenosyl-L-homocysteine + H(+). Specifically methylates the pseudouridine at position 1915 (m3Psi1915) in 23S rRNA. In Moorella thermoacetica (strain ATCC 39073 / JCM 9320), this protein is Ribosomal RNA large subunit methyltransferase H.